The sequence spans 648 residues: Threonine--tRNA ligase (648 aa).

The TGS domain occupies 1 to 63 (MTEINIEFPD…NENVKIEIVT (63 aa)). Residues 243–541 (DHRVIGNNLD…LIEMYKGAFP (299 aa)) are catalytic. Zn(2+) is bound by residues cysteine 337, histidine 388, and histidine 518.

The protein belongs to the class-II aminoacyl-tRNA synthetase family. In terms of assembly, homodimer. Requires Zn(2+) as cofactor.

The protein localises to the cytoplasm. The catalysed reaction is tRNA(Thr) + L-threonine + ATP = L-threonyl-tRNA(Thr) + AMP + diphosphate + H(+). Its function is as follows. Catalyzes the attachment of threonine to tRNA(Thr) in a two-step reaction: L-threonine is first activated by ATP to form Thr-AMP and then transferred to the acceptor end of tRNA(Thr). Also edits incorrectly charged L-seryl-tRNA(Thr). The sequence is that of Threonine--tRNA ligase from Pediococcus pentosaceus (strain ATCC 25745 / CCUG 21536 / LMG 10740 / 183-1w).